Here is a 495-residue protein sequence, read N- to C-terminus: EF-hand calcium-binding domain-containing protein 14 (495 aa).

2 disordered regions span residues 1-50 (MKKR…EEEE) and 381-404 (TNKP…FTSK). Residue serine 17 is modified to Phosphoserine. Positions 18-31 (RRKKPKKGPSSHRL) are enriched in basic residues. A compositionally biased stretch (acidic residues) spans 37–50 (PDSDSESSSEEEEE). 2 consecutive EF-hand domains span residues 434–463 (SSTE…WTSL) and 464–495 (GSAM…ALGI). Ca(2+) contacts are provided by aspartate 477, aspartate 479, aspartate 481, arginine 483, and glutamate 488.

This chain is EF-hand calcium-binding domain-containing protein 14 (EFCAB14), found in Homo sapiens (Human).